A 359-amino-acid chain; its full sequence is Homeotic protein knotted-1 (359 aa).

Disordered regions lie at residues 1-34 (MEEITQHFGVGASSHGHGHGQHHHHHHHHHPWAS) and 213-232 (LSSGSSEEDQEGSGGETELP). Positions 16–31 (GHGHGQHHHHHHHHHP) are enriched in basic residues. Positions 242–262 (ELKHHLLKKYSGYLSSLKQEL) constitute an ELK domain. The segment at residues 263 to 326 (SKKKKKGKLP…NQRKRHWKPS (64 aa)) is a DNA-binding region (homeobox; TALE-type).

Belongs to the TALE/KNOX homeobox family. Forms homodimers. Binds to MBP2C; this interaction reduces RNA binding capacity. In terms of tissue distribution, expressed in apical meristems of vegetative and floral stems as well as in the underlying ground meristem. Specifically expressed in vascular bundles developing both in the leaf and stem. Very low levels of expression in leaves.

It is found in the nucleus. The protein localises to the cell junction. The protein resides in the plasmodesma. Its subcellular location is the cytoplasm. Functionally, binds to RNA. Possible transcription factor that regulates genes involved in development. Mutations in KN-1 alter leaf development. Foci of cells along the lateral vein do not differentiate properly but continue to divide, forming knots. May participate in the switch from indeterminate to determinate cell fates. Probably binds to the DNA sequence 5'-TGAC-3'. The chain is Homeotic protein knotted-1 (KN-1) from Zea mays (Maize).